Reading from the N-terminus, the 828-residue chain is Periplasmic nitrate reductase (828 aa).

The tat-type signal signal peptide spans Met1 to Ala31. The 4Fe-4S Mo/W bis-MGD-type domain maps to Ile39 to Asp95. 4 residues coordinate [4Fe-4S] cluster: Cys46, Cys49, Cys53, and Cys81. Residues Lys83, Gln150, Asn175, Cys179, Trp212–Met219, Ser243–His247, Gln262–Asp264, Met372, Gln376, Asn482, Ser508–Asp509, Lys531, Asp558, and Thr718–Thr727 each bind Mo-bis(molybdopterin guanine dinucleotide). Phe794 is a binding site for substrate. Residues Asn802 and Lys819 each contribute to the Mo-bis(molybdopterin guanine dinucleotide) site.

This sequence belongs to the prokaryotic molybdopterin-containing oxidoreductase family. NasA/NapA/NarB subfamily. In terms of assembly, component of the periplasmic nitrate reductase NapAB complex composed of NapA and NapB. Requires [4Fe-4S] cluster as cofactor. Mo-bis(molybdopterin guanine dinucleotide) serves as cofactor. Predicted to be exported by the Tat system. The position of the signal peptide cleavage has not been experimentally proven.

The protein resides in the periplasm. The enzyme catalyses 2 Fe(II)-[cytochrome] + nitrate + 2 H(+) = 2 Fe(III)-[cytochrome] + nitrite + H2O. In terms of biological role, catalytic subunit of the periplasmic nitrate reductase complex NapAB. Receives electrons from NapB and catalyzes the reduction of nitrate to nitrite. This is Periplasmic nitrate reductase from Salmonella paratyphi C (strain RKS4594).